The primary structure comprises 316 residues: Ribosomal protein L11 methyltransferase (316 aa).

S-adenosyl-L-methionine-binding residues include Thr157, Gly178, Asp200, and Asn243.

The protein belongs to the methyltransferase superfamily. PrmA family.

It localises to the cytoplasm. The enzyme catalyses L-lysyl-[protein] + 3 S-adenosyl-L-methionine = N(6),N(6),N(6)-trimethyl-L-lysyl-[protein] + 3 S-adenosyl-L-homocysteine + 3 H(+). Its function is as follows. Methylates ribosomal protein L11. The polypeptide is Ribosomal protein L11 methyltransferase (Streptococcus pneumoniae (strain ATCC 700669 / Spain 23F-1)).